Consider the following 1131-residue polypeptide: Phytochrome a (1131 aa).

Positions Met1 to Arg23 are enriched in low complexity. The disordered stretch occupies residues Met1–Ala26. A GAF domain is found at Ser219–Phe404. Cys324 is a phytochromobilin binding site. 2 PAS domains span residues Val620–Lys690 and Val750–Glu834. The region spanning Tyr904–Ala1124 is the Histidine kinase domain.

Belongs to the phytochrome family. In terms of assembly, homodimer. Contains one covalently linked phytochromobilin chromophore.

In terms of biological role, regulatory photoreceptor which exists in two forms that are reversibly interconvertible by light: the Pr form that absorbs maximally in the red region of the spectrum and the Pfr form that absorbs maximally in the far-red region. Photoconversion of Pr to Pfr induces an array of morphogenic responses, whereas reconversion of Pfr to Pr cancels the induction of those responses. Pfr controls the expression of a number of nuclear genes including those encoding the small subunit of ribulose-bisphosphate carboxylase, chlorophyll A/B binding protein, protochlorophyllide reductase, rRNA, etc. It also controls the expression of its own gene(s) in a negative feedback fashion. The polypeptide is Phytochrome a (PHYA) (Sorghum bicolor (Sorghum)).